The chain runs to 128 residues: Large ribosomal subunit protein uL22 (128 aa).

It belongs to the universal ribosomal protein uL22 family. Part of the 50S ribosomal subunit.

This protein binds specifically to 23S rRNA; its binding is stimulated by other ribosomal proteins, e.g. L4, L17, and L20. It is important during the early stages of 50S assembly. It makes multiple contacts with different domains of the 23S rRNA in the assembled 50S subunit and ribosome. Functionally, the globular domain of the protein is located near the polypeptide exit tunnel on the outside of the subunit, while an extended beta-hairpin is found that lines the wall of the exit tunnel in the center of the 70S ribosome. In Prochlorococcus marinus (strain AS9601), this protein is Large ribosomal subunit protein uL22.